The primary structure comprises 308 residues: GTPase Era (308 aa).

The region spanning 14–181 is the Era-type G domain; sequence RCGFVALIGA…RSTLAEMVPP (168 aa). Positions 22–29 are G1; the sequence is GAPNVGKS. 22 to 29 lines the GTP pocket; that stretch reads GAPNVGKS. Residues 48–52 are G2; it reads QTTRA. Residues 69–72 are G3; that stretch reads DTPG. Residues 69 to 73 and 131 to 134 each bind GTP; these read DTPGI and NKVD. Positions 131–134 are G4; it reads NKVD. The interval 160–162 is G5; it reads IAA. The region spanning 212 to 289 is the KH type-2 domain; sequence LHQELPYQST…HLFLFVKVRE (78 aa).

The protein belongs to the TRAFAC class TrmE-Era-EngA-EngB-Septin-like GTPase superfamily. Era GTPase family. In terms of assembly, monomer.

It is found in the cytoplasm. The protein resides in the cell inner membrane. An essential GTPase that binds both GDP and GTP, with rapid nucleotide exchange. Plays a role in 16S rRNA processing and 30S ribosomal subunit biogenesis and possibly also in cell cycle regulation and energy metabolism. The protein is GTPase Era of Bradyrhizobium diazoefficiens (strain JCM 10833 / BCRC 13528 / IAM 13628 / NBRC 14792 / USDA 110).